Consider the following 2324-residue polypeptide: Acetyl-CoA carboxylase (2324 aa).

Met1 carries the N-acetylmethionine modification. The disordered stretch occupies residues 1–34; it reads MEESSQPAKPLEMNPHSRFIIGSVSEDNSEDETS. Phosphoserine occurs at positions 78 and 80. Residues 117–618 form the Biotin carboxylation domain; the sequence is VIEKVLIANN…DTGWLDRLIA (502 aa). The ATP-grasp domain occupies 275-466; it reads QKRILNVPQE…LPAAQLQIAM (192 aa). An ATP-binding site is contributed by 315 to 320; sequence GGGGKG. Residues Glu424, Glu437, and Asn439 each coordinate Mn(2+). Arg441 is a catalytic residue. Positions 745-819 constitute a Biotinyl-binding domain; sequence FEKENDPSIL…DPGCVIAKLQ (75 aa). Lys786 is modified (N6-biotinyllysine). A Phosphoserine modification is found at Ser1193. The region spanning 1553–1891 is the CoA carboxyltransferase N-terminal domain; that stretch reads PYVTKDLLQS…SVYSPVPILK (339 aa). The segment at 1553–2211 is carboxyltransferase; it reads PYVTKDLLQS…EDVVKKKIHD (659 aa). CoA contacts are provided by Arg1800, Lys2104, and Arg2106. Residues 1895–2211 enclose the CoA carboxyltransferase C-terminal domain; that stretch reads PIDRTIDFVP…EDVVKKKIHD (317 aa).

It depends on biotin as a cofactor. The cofactor is Mn(2+).

The protein localises to the cytoplasm. It carries out the reaction hydrogencarbonate + acetyl-CoA + ATP = malonyl-CoA + ADP + phosphate + H(+). The enzyme catalyses N(6)-biotinyl-L-lysyl-[protein] + hydrogencarbonate + ATP = N(6)-carboxybiotinyl-L-lysyl-[protein] + ADP + phosphate + H(+). It functions in the pathway lipid metabolism; malonyl-CoA biosynthesis; malonyl-CoA from acetyl-CoA: step 1/1. With respect to regulation, by phosphorylation. In terms of biological role, catalyzes the rate-limiting reaction in the biogenesis of long-chain fatty acids. Carries out three functions: biotin carboxyl carrier protein, biotin carboxylase and carboxyltransferase. This Gallus gallus (Chicken) protein is Acetyl-CoA carboxylase (ACAC).